A 388-amino-acid polypeptide reads, in one-letter code: Methylthioribose-1-phosphate isomerase (388 aa).

The Proton donor role is filled by Asp258.

This sequence belongs to the eIF-2B alpha/beta/delta subunits family. MtnA subfamily.

The protein resides in the cytoplasm. The protein localises to the nucleus. The enzyme catalyses 5-(methylsulfanyl)-alpha-D-ribose 1-phosphate = 5-(methylsulfanyl)-D-ribulose 1-phosphate. It participates in amino-acid biosynthesis; L-methionine biosynthesis via salvage pathway; L-methionine from S-methyl-5-thio-alpha-D-ribose 1-phosphate: step 1/6. Its function is as follows. Catalyzes the interconversion of methylthioribose-1-phosphate (MTR-1-P) into methylthioribulose-1-phosphate (MTRu-1-P). The sequence is that of Methylthioribose-1-phosphate isomerase from Sordaria macrospora (strain ATCC MYA-333 / DSM 997 / K(L3346) / K-hell).